Consider the following 1042-residue polypeptide: MDKILEGLVSSSHPLPLKRMIVRKVVEFAEHWLDEAQCEAMFDLTTRLILEGQDPFQRQVGHQVLEAYARYHRPEFESFFNKTFVLGLLQQGYHSVDRKDVAILDYIHNGLKLIMSCPSVLDLFSLLQVEVLRMVCERPEPVLCARLSDLLTDFVQCVPKGKLSVTFCQQLVRTIGHFQCVSTQEKELREYVSQVTKVSTLLQNIWKAEPSTLLPSLQEVFASISSTDASFEPSVALASLVQHIPLQMITVLIRSLTTDPNVKDASMTQALCRMIDWLSWPLAQHVDTWVIALLKGLAAVQKFTILIDVTLLKIELVFNRLWFPLVRPGALAVLSHMLLSFQHSPEAFHVIVPHIVNLVHSFRSDGLPSSTAFLVQLTELVHCMMYHYSGFPDLYEPILEAVKDFPKPSEEKIKLILNQSAWTSQSNALASCLSRLSGKSETGKTGLINLGNTCYMNSVLQALFMATEFRRQVLSLNLNGCNSLMKKLQHLFAFLAHTQREAYAPRIFFEASRPPWFTPRSQQDCSEYLRFLLDRLHEEEKILRVQSSHKPSEGLDCAETCLQEVTSKVAVPTESPGTGDSEKTLIEKMFGGKLRTHICCLNCGSTSHKVEAFTDLSLAFCPSPSVEDLSFQDTASLPSAQDDGLMQTSVADPEEEPVVYNPATAAFVCDSVVNQRVLGSPPVEFHCAESSSVPEESAKILISKDVPQNPGGESTTSVTDLLNYFLAPEVLTGENQYYCESCASLQNAEKTMQITEEPEYLILTLLRFSYDQKYHVRRKILDNVSLPLVLELPVKRTASFSSLSQSWSVDVDFTDINENLPKKLKPSGTEEAFCPKLVPYLLSSVVVHSGVSSESGHYYSYARNITGTESSYQMCPQSESLALAPSQSCLLGVESPNTVIEQDLENKEMSQEWFLFNDSRVTFTSFQSVQKITSRFPKDTAYVLLYKKQSRANGIDSDNPASGVWANGDPPLQKELMDAITKDNKLYLQEQELNARARALQAASASCSFRPNGFDDNDPPGSCGPTGGGGGGGFNTVGRLVF.

The USP domain occupies 445–949 (TGLINLGNTC…TAYVLLYKKQ (505 aa)). The active-site Nucleophile is the C454. Catalysis depends on H857, which acts as the Proton acceptor.

This sequence belongs to the peptidase C19 family. As to quaternary structure, interacts with isoform 1 of FBXW7; this interaction prevents FBXW7-mediated degradation of MYC.

It localises to the cytoplasm. The protein localises to the nucleus. It carries out the reaction Thiol-dependent hydrolysis of ester, thioester, amide, peptide and isopeptide bonds formed by the C-terminal Gly of ubiquitin (a 76-residue protein attached to proteins as an intracellular targeting signal).. Its function is as follows. Deubiquitinating enzyme that plays a role in various cellular processes, including DNA repair, cell cycle regulation, and immune response. Plays a role in the inhibition of type I interferon signaling by mediating the 'Lys-33' to 'Lys-48' ubiquitination transition of TBK1 leading to its degradation. Cleaves the ubiquitin chain from the histone demethylase LSD1/KDM1A and prevents it from degradation by the 26S proteasome, thus maintaining LSD1 protein level in cells. Plays a role in the DNA damage response by regulating the deacetylase activity of HDAC1. Mechanistically, removes the 'Lys-63'-linked ubiquitin chain promoting the deacetylase activity of HDAC1 in response to DNA damage. Also acts as a specific deubiquitinase of histone deacetylase 3/HDAC3 and cleaves its 'Lys-63'-linked ubiquitin chains to lower its histone deacetylase activity. Regulates MYC levels and cell proliferation via antagonizing ubiquitin E3 ligase FBXW7 thereby preventing MYC 'Lys-48'-linked ubiquitination and degradation. Participates in antiviral response by removing both 'Lys-48'-linked and 'Lys-63'-linked polyubiquitination of Zika virus envelope protein E. Constitutively associated with IL-33R/IL1RL1, deconjugates its 'Lys-27'-linked polyubiquitination resulting in its autophagic degradation. This Mus musculus (Mouse) protein is Ubiquitin carboxyl-terminal hydrolase 38 (Usp38).